The primary structure comprises 604 residues: MSVEVDKSSHSKPKIEKKSKRNKRKWLNDENKTHVTASEAAIERLKKSASFSQAAQQALKQSRKEDNERDIEMQDVDAEAQPHDLLPIPQPSVEDFVDSKPHVKNITSVLPKWLAEPITVDPNTTVEFSSLNISSKLVERLQKQNITRGFAVQAAVLPLLLQDGRHGPMYSYGGDVCVSAATGSGKTLSYVIPIVQCLSHRTVPRLRCVVIVPTRELTVQVAKTFEYYMSGAGLQVCAWTGQKSLRHETYQLNGDENECRIDVLVSTPGRLVDHIRNDESFSLQHLRYMVIDEADRLLDQSFQDWVDTVMMEISHPKCLQNKSNILDLDQNISPTFLPDIDTLLPYRLPSPLQKLVFSATLTRDPSKIASLKLHNPRLVLVQNKDMEVDDGGEIEDDAIVFSVPPTLQEYHVSVSSEKPILLYHLIHSKNLTNILCFVKSNEAAARLHRLLELIHESLNQSFSCGLFTSSLSRDERKKIISRFATGDLNLLVCSDLMARGIDVANTQNVINYDPPLSVRSYVHRIGRTARAGREGFAWTLVQSHEGHHFSKLVKQLRRTLPIKRIKIEFSHISEEFVVAYDKALEALRVEVFNSRYPQQKSFLT.

A compositionally biased stretch (basic and acidic residues) spans Met1–Glu16. Disordered regions lie at residues Met1–Ala37 and Phe51–Asp70. Residues Phe51–Lys60 are compositionally biased toward low complexity. The Q motif signature appears at Gly149 to Leu157. A Helicase ATP-binding domain is found at Gly167–Val379. Position 180–187 (Ala180–Thr187) interacts with ATP. The DEAD box motif lies at Asp292–Asp295. The region spanning Thr406 to Ser573 is the Helicase C-terminal domain.

Belongs to the DEAD box helicase family. DDX51/DBP6 subfamily. As to quaternary structure, associated with pre-ribosomal particles.

It is found in the nucleus. The protein localises to the nucleolus. The enzyme catalyses ATP + H2O = ADP + phosphate + H(+). Its function is as follows. ATP-binding RNA helicase involved in the biogenesis of 60S ribosomal subunits and is required for the normal formation of 25S and 5.8S rRNAs. The sequence is that of ATP-dependent RNA helicase dbp6 (dbp6) from Schizosaccharomyces pombe (strain 972 / ATCC 24843) (Fission yeast).